We begin with the raw amino-acid sequence, 209 residues long: Ribosomal RNA small subunit methyltransferase G (209 aa).

S-adenosyl-L-methionine-binding positions include Gly77, Met82, 128–129, and Arg143; that span reads VE.

The protein belongs to the methyltransferase superfamily. RNA methyltransferase RsmG family.

It localises to the cytoplasm. It carries out the reaction guanosine(527) in 16S rRNA + S-adenosyl-L-methionine = N(7)-methylguanosine(527) in 16S rRNA + S-adenosyl-L-homocysteine. Specifically methylates the N7 position of guanine in position 527 of 16S rRNA. The protein is Ribosomal RNA small subunit methyltransferase G of Chromobacterium violaceum (strain ATCC 12472 / DSM 30191 / JCM 1249 / CCUG 213 / NBRC 12614 / NCIMB 9131 / NCTC 9757 / MK).